The following is an 810-amino-acid chain: F-BAR domain only protein 2 (810 aa).

Positions 3 to 250 (MAYFVENFWG…NMANTTVESL (248 aa)) constitute an F-BAR domain. The segment at 3–274 (MAYFVENFWG…PGLIEFEECD (272 aa)) is mediates dimerization and binding to membranes enriched in Pi(4,5)-P2 and induces their tubulation. The stretch at 87–156 (HLDLVRKLQE…CVEQERLKKE (70 aa)) forms a coiled coil. Residue lysine 297 forms a Glycyl lysine isopeptide (Lys-Gly) (interchain with G-Cter in SUMO2) linkage. The segment at 301 to 352 (DAESVECPDADSLNIPDVDEEGYSIKPETNQNDTKENHFYSSSDSDSEDEEP) is disordered. At serine 312 the chain carries Phosphoserine. At threonine 385 the chain carries Phosphothreonine. A phosphoserine mark is found at serine 387, serine 394, and serine 403. The segment at 404-537 (NEELTKSKPS…VSRGPSPVSL (134 aa)) is disordered. The span at 433–456 (PSLDSSSSSSLTSSSSARPTTPLS) shows a compositional bias: low complexity. Phosphoserine is present on residues serine 488, serine 493, serine 496, serine 508, serine 510, serine 511, and serine 533. Low complexity predominate over residues 502 to 521 (PLARAESSSSISSSASLSAA). The interval 521 to 810 (ANTPTVGVSR…FATGRYLADC (290 aa)) is mediates interaction with DAB2, EPS15, EPS15R and ITSN1. Residues 542–809 (TLPVAVALTE…RFATGRYLAD (268 aa)) enclose the MHD domain.

It belongs to the FCHO family. In terms of assembly, homodimer; disulfide-linked. May form homotetramer. Interacts with AP2A1. Interacts with EPS15, EPS15R, ITSN1 and ITSN2; recruit those scaffolding proteins which in turn may interact with the adaptor protein complex AP-2 at the plasma membrane. Interacts with DAB2 (via DPF motifs); mediates LDL receptor/LDLR endocytosis. In terms of processing, ubiquitinated. Mainly undergoes monoubiquitination but also polyubiquitination.

The protein localises to the membrane. Its subcellular location is the clathrin-coated pit. Its function is as follows. Functions in an early step of clathrin-mediated endocytosis. Has both a membrane binding/bending activity and the ability to recruit proteins essential to the formation of functional clathrin-coated pits. Has a lipid-binding activity with a preference for membranes enriched in phosphatidylserine and phosphoinositides (Pi(4,5) biphosphate) like the plasma membrane. Its membrane-bending activity might be important for the subsequent action of clathrin and adaptors in the formation of clathrin-coated vesicles. Involved in adaptor protein complex AP-2-dependent endocytosis of the transferrin receptor, it also functions in the AP-2-independent endocytosis of the LDL receptor. The chain is F-BAR domain only protein 2 (FCHO2) from Homo sapiens (Human).